We begin with the raw amino-acid sequence, 1132 residues long: Error-prone DNA polymerase (1132 aa).

This sequence belongs to the DNA polymerase type-C family. DnaE2 subfamily.

It is found in the cytoplasm. It catalyses the reaction DNA(n) + a 2'-deoxyribonucleoside 5'-triphosphate = DNA(n+1) + diphosphate. Its function is as follows. DNA polymerase involved in damage-induced mutagenesis and translesion synthesis (TLS). It is not the major replicative DNA polymerase. This is Error-prone DNA polymerase from Anaeromyxobacter dehalogenans (strain 2CP-C).